A 346-amino-acid polypeptide reads, in one-letter code: Protein phosphatase 1 regulatory subunit 7 (346 aa).

Over residues M1–M13 the composition is skewed to acidic residues. Positions M1 to L46 are disordered. Over residues E14–G37 the composition is skewed to basic and acidic residues. 11 LRR repeats span residues E63 to K84, K85 to V106, T107 to R128, D129 to S150, H151 to T172, Q173 to R194, E195 to T216, N217 to V238, N239 to N260, K261 to S282, and E283 to S304. The region spanning N317–F346 is the LRRCT domain.

The protein belongs to the SDS22 family.

Its subcellular location is the nucleus. Functionally, regulatory subunit of protein phosphatase 1. This chain is Protein phosphatase 1 regulatory subunit 7 (ppp1r7), found in Xenopus tropicalis (Western clawed frog).